The primary structure comprises 416 residues: MSLVIIGINHKTATVDLREKVAFSPDRIHDAMKSLASRTRTGEAVIVSTCNRTELYCNNAEKEDIIEWLEDYHGLDHNDLMPCIYAYEEQVAVKHLMRVASGLDSLVLGEPQILGQVKQAFVKAKEAGTIALTIDRLFQNTFSVAKKVRTDTEIGAAAVSVAFAAVSMAKHIFSSLSTTKVLLIGAGETIELVAKHLKDNGVASMVVANRTIERAQAMCEEFNATAITLEQIPDFLPKADIVISSTASPLPILGKGMVEKALKQRRHQPMLLVDIAVPRDIEAEVGELDDAFLYTVDDLHSIIEQNMASRKEAAEQAELITEDQSHIFMEWIRSLESVDSIREYRSQSLAIKDELVERALNKLSQGSDSEQVILELANRLTNRLIHSPTQALTSASRQGDLNTLGQLRSALGLDKN.

Residues 49-52 (TCNR), serine 105, 110-112 (EPQ), and glutamine 116 each bind substrate. Cysteine 50 serves as the catalytic Nucleophile. 185–190 (GAGETI) serves as a coordination point for NADP(+).

Belongs to the glutamyl-tRNA reductase family. As to quaternary structure, homodimer.

The catalysed reaction is (S)-4-amino-5-oxopentanoate + tRNA(Glu) + NADP(+) = L-glutamyl-tRNA(Glu) + NADPH + H(+). It functions in the pathway porphyrin-containing compound metabolism; protoporphyrin-IX biosynthesis; 5-aminolevulinate from L-glutamyl-tRNA(Glu): step 1/2. Catalyzes the NADPH-dependent reduction of glutamyl-tRNA(Glu) to glutamate 1-semialdehyde (GSA). In Shewanella frigidimarina (strain NCIMB 400), this protein is Glutamyl-tRNA reductase.